We begin with the raw amino-acid sequence, 832 residues long: Protein P (832 aa).

The segment at 1-177 (MPLSYQHFRK…FCGSPYSWEQ (177 aa)) is terminal protein domain (TP). Residues 178-335 (ELQHGAESFH…YCLSHLVSLL (158 aa)) form a spacer region. The interval 336 to 679 (DDWGPCTEHG…YSTLYPVARQ (344 aa)) is polymerase/reverse transcriptase domain (RT). A Reverse transcriptase domain is found at 346 to 589 (EHHIRIPRTP…YSLHFMGYVI (244 aa)). Positions 418, 540, and 541 each coordinate Mg(2+).

The protein belongs to the hepadnaviridae P protein family.

It catalyses the reaction DNA(n) + a 2'-deoxyribonucleoside 5'-triphosphate = DNA(n+1) + diphosphate. It carries out the reaction Endonucleolytic cleavage to 5'-phosphomonoester.. Its activity is regulated as follows. Activated by host HSP70 and HSP40 in vitro to be able to bind the epsilon loop of the pgRNA. Because deletion of the RNase H region renders the protein partly chaperone-independent, the chaperones may be needed indirectly to relieve occlusion of the RNA-binding site by this domain. Inhibited by several reverse-transcriptase inhibitors: Lamivudine, Adefovir and Entecavir. Multifunctional enzyme that converts the viral RNA genome into dsDNA in viral cytoplasmic capsids. This enzyme displays a DNA polymerase activity that can copy either DNA or RNA templates, and a ribonuclease H (RNase H) activity that cleaves the RNA strand of RNA-DNA heteroduplexes in a partially processive 3'- to 5'-endonucleasic mode. Neo-synthesized pregenomic RNA (pgRNA) are encapsidated together with the P protein, and reverse-transcribed inside the nucleocapsid. Initiation of reverse-transcription occurs first by binding the epsilon loop on the pgRNA genome, and is initiated by protein priming, thereby the 5'-end of (-)DNA is covalently linked to P protein. Partial (+)DNA is synthesized from the (-)DNA template and generates the relaxed circular DNA (RC-DNA) genome. After budding and infection, the RC-DNA migrates in the nucleus, and is converted into a plasmid-like covalently closed circular DNA (cccDNA). The activity of P protein does not seem to be necessary for cccDNA generation, and is presumably released from (+)DNA by host nuclear DNA repair machinery. This Pan troglodytes (Chimpanzee) protein is Protein P.